The sequence spans 298 residues: Enoyl-CoA hydratase AKT6-1 (298 aa).

Residues 1 to 23 (MTFSTTKSVAMSPDDDAPSFDIN) are disordered.

The protein belongs to the enoyl-CoA hydratase/isomerase family.

Its pathway is mycotoxin biosynthesis. Enoyl-CoA hydratase; part of the gene clusters that mediate the biosynthesis of the host-selective toxins (HSTs) AK-toxins responsible for Japanese pear black spot disease by the Japanese pear pathotype. AK-toxins are esters of 9,10-epoxy 8-hydroxy 9-methyldecatrienoic acid (EDA). On cellular level, AK-toxins affect plasma membrane of susceptible cells and cause a sudden increase in loss of K(+) after a few minutes of toxin treatment. The acyl-CoA ligase AKT1, the hydrolase AKT2 and enoyl-CoA hydratase AKT3 are all involved in the biosynthesis of the AK-, AF- and ACT-toxin common 9,10-epoxy-8-hydroxy-9-methyl-decatrienoic acid (EDA) structural moiety. Part of the EDA biosynthesis occurs in the peroxisome since these 3 enzymes are localized in peroxisomes. The exact roles of the 3 enzymes, as well as of additional AK-toxin clusters enzymes, including AKT4, AKT6 and AKTS1, have still to be elucidated. The Cytochrome P450 monooxygenase AKT7 on the other side functions to limit production of EDA and AK-toxin, probably via the catalysis of a side reaction of EDA or its precursor. This is Enoyl-CoA hydratase AKT6-1 from Alternaria alternata (Alternaria rot fungus).